The primary structure comprises 363 residues: Phosphoserine aminotransferase (363 aa).

Residue R46 coordinates L-glutamate. Pyridoxal 5'-phosphate-binding positions include 80–81 (AT), W106, T156, D176, and Q199. K200 is subject to N6-(pyridoxal phosphate)lysine. 241 to 242 (NT) contacts pyridoxal 5'-phosphate.

It belongs to the class-V pyridoxal-phosphate-dependent aminotransferase family. SerC subfamily. Homodimer. The cofactor is pyridoxal 5'-phosphate.

The protein localises to the cytoplasm. It carries out the reaction O-phospho-L-serine + 2-oxoglutarate = 3-phosphooxypyruvate + L-glutamate. The enzyme catalyses 4-(phosphooxy)-L-threonine + 2-oxoglutarate = (R)-3-hydroxy-2-oxo-4-phosphooxybutanoate + L-glutamate. It functions in the pathway amino-acid biosynthesis; L-serine biosynthesis; L-serine from 3-phospho-D-glycerate: step 2/3. The protein operates within cofactor biosynthesis; pyridoxine 5'-phosphate biosynthesis; pyridoxine 5'-phosphate from D-erythrose 4-phosphate: step 3/5. Functionally, catalyzes the reversible conversion of 3-phosphohydroxypyruvate to phosphoserine and of 3-hydroxy-2-oxo-4-phosphonooxybutanoate to phosphohydroxythreonine. The chain is Phosphoserine aminotransferase from Leptospira interrogans serogroup Icterohaemorrhagiae serovar copenhageni (strain Fiocruz L1-130).